A 123-amino-acid chain; its full sequence is MIICNFMNICMIDPNDVYKWFMEFSLDSYDWVMINNVYSMGLFADGGLTTTKPYITSSNYVLKMSNIKKDGYWNVVWDTLYYNFIYHNYDKFKGRGKIYLSQWDRQRKKQEILKLAPKIMNRL.

This is an uncharacterized protein from Acanthamoeba polyphaga mimivirus (APMV).